A 133-amino-acid chain; its full sequence is Ribosome-binding factor A (133 aa).

Belongs to the RbfA family. In terms of assembly, monomer. Binds 30S ribosomal subunits, but not 50S ribosomal subunits or 70S ribosomes.

It is found in the cytoplasm. In terms of biological role, one of several proteins that assist in the late maturation steps of the functional core of the 30S ribosomal subunit. Associates with free 30S ribosomal subunits (but not with 30S subunits that are part of 70S ribosomes or polysomes). Required for efficient processing of 16S rRNA. May interact with the 5'-terminal helix region of 16S rRNA. The chain is Ribosome-binding factor A from Cronobacter sakazakii (strain ATCC BAA-894) (Enterobacter sakazakii).